The chain runs to 361 residues: Phosphoserine aminotransferase (361 aa).

Arg-42 serves as a coordination point for L-glutamate. Pyridoxal 5'-phosphate is bound by residues 76–77 (AR), Trp-102, Thr-153, Asp-173, and Gln-196. Lys-197 carries the N6-(pyridoxal phosphate)lysine modification. Pyridoxal 5'-phosphate is bound at residue 238–239 (NT).

This sequence belongs to the class-V pyridoxal-phosphate-dependent aminotransferase family. SerC subfamily. Homodimer. The cofactor is pyridoxal 5'-phosphate.

The protein resides in the cytoplasm. The catalysed reaction is O-phospho-L-serine + 2-oxoglutarate = 3-phosphooxypyruvate + L-glutamate. It carries out the reaction 4-(phosphooxy)-L-threonine + 2-oxoglutarate = (R)-3-hydroxy-2-oxo-4-phosphooxybutanoate + L-glutamate. It participates in amino-acid biosynthesis; L-serine biosynthesis; L-serine from 3-phospho-D-glycerate: step 2/3. Its pathway is cofactor biosynthesis; pyridoxine 5'-phosphate biosynthesis; pyridoxine 5'-phosphate from D-erythrose 4-phosphate: step 3/5. In terms of biological role, catalyzes the reversible conversion of 3-phosphohydroxypyruvate to phosphoserine and of 3-hydroxy-2-oxo-4-phosphonooxybutanoate to phosphohydroxythreonine. This Buchnera aphidicola subsp. Schizaphis graminum (strain Sg) protein is Phosphoserine aminotransferase.